The following is a 277-amino-acid chain: 4-hydroxy-tetrahydrodipicolinate reductase (277 aa).

An NAD(+)-binding site is contributed by 9 to 14 (GATGRM). Lys37 is a binding site for NADP(+). Position 75 to 77 (75 to 77 (GTS)) interacts with NAD(+). His132 functions as the Proton donor/acceptor in the catalytic mechanism. The active-site Proton donor is Lys136. A (S)-2,3,4,5-tetrahydrodipicolinate-binding site is contributed by 142–143 (GT). The disordered stretch occupies residues 245–277 (SRERATQTAPTGAASGPVDDGGPSGQAATVTSA).

Belongs to the DapB family.

It is found in the cytoplasm. The catalysed reaction is (S)-2,3,4,5-tetrahydrodipicolinate + NAD(+) + H2O = (2S,4S)-4-hydroxy-2,3,4,5-tetrahydrodipicolinate + NADH + H(+). It carries out the reaction (S)-2,3,4,5-tetrahydrodipicolinate + NADP(+) + H2O = (2S,4S)-4-hydroxy-2,3,4,5-tetrahydrodipicolinate + NADPH + H(+). It functions in the pathway amino-acid biosynthesis; L-lysine biosynthesis via DAP pathway; (S)-tetrahydrodipicolinate from L-aspartate: step 4/4. In terms of biological role, catalyzes the conversion of 4-hydroxy-tetrahydrodipicolinate (HTPA) to tetrahydrodipicolinate. This Clavibacter sepedonicus (Clavibacter michiganensis subsp. sepedonicus) protein is 4-hydroxy-tetrahydrodipicolinate reductase.